The chain runs to 369 residues: 3-dehydroquinate synthase (369 aa).

Residues D71–K76, G105–D109, T129–T130, K142, K151, and T169–T172 each bind NAD(+). Zn(2+) contacts are provided by E184, H247, and H264.

The protein belongs to the sugar phosphate cyclases superfamily. Dehydroquinate synthase family. The cofactor is Co(2+). Zn(2+) serves as cofactor. It depends on NAD(+) as a cofactor.

Its subcellular location is the cytoplasm. The catalysed reaction is 7-phospho-2-dehydro-3-deoxy-D-arabino-heptonate = 3-dehydroquinate + phosphate. It functions in the pathway metabolic intermediate biosynthesis; chorismate biosynthesis; chorismate from D-erythrose 4-phosphate and phosphoenolpyruvate: step 2/7. Functionally, catalyzes the conversion of 3-deoxy-D-arabino-heptulosonate 7-phosphate (DAHP) to dehydroquinate (DHQ). The protein is 3-dehydroquinate synthase of Dichelobacter nodosus (strain VCS1703A).